A 127-amino-acid chain; its full sequence is Small ribosomal subunit protein uS13 (127 aa).

The interval 90-127 (KRHREGLPVNGQRTRTNARTRKGKRKTVAGRSQSTQKK) is disordered. The segment covering 105–117 (TNARTRKGKRKTV) has biased composition (basic residues).

The protein belongs to the universal ribosomal protein uS13 family. In terms of assembly, part of the 30S ribosomal subunit. Forms a loose heterodimer with protein S19. Forms two bridges to the 50S subunit in the 70S ribosome.

Its function is as follows. Located at the top of the head of the 30S subunit, it contacts several helices of the 16S rRNA. In the 70S ribosome it contacts the 23S rRNA (bridge B1a) and protein L5 of the 50S subunit (bridge B1b), connecting the 2 subunits; these bridges are implicated in subunit movement. Contacts the tRNAs in the A and P-sites. The chain is Small ribosomal subunit protein uS13 from Salinibacter ruber (strain DSM 13855 / M31).